A 1583-amino-acid polypeptide reads, in one-letter code: Pentafunctional AROM polypeptide (1583 aa).

The tract at residues 1–384 (MSNPTKISIL…YETRASVVAN (384 aa)) is 3-dehydroquinate synthase. Residues 44-46 (DTN), 81-84 (EVSK), 114-116 (GGV), and aspartate 119 contribute to the NAD(+) site. Arginine 130 is a 7-phospho-2-dehydro-3-deoxy-D-arabino-heptonate binding site. 139–140 (TT) contacts NAD(+). Residues aspartate 146 and lysine 152 each coordinate 7-phospho-2-dehydro-3-deoxy-D-arabino-heptonate. Lysine 161 contributes to the NAD(+) binding site. Residue asparagine 162 participates in 7-phospho-2-dehydro-3-deoxy-D-arabino-heptonate binding. NAD(+) contacts are provided by residues 179-182 (FLET) and asparagine 190. Glutamate 194 serves as a coordination point for Zn(2+). Residues 194-197 (EVIK) and lysine 250 each bind 7-phospho-2-dehydro-3-deoxy-D-arabino-heptonate. Glutamate 260 serves as the catalytic Proton acceptor; for 3-dehydroquinate synthase activity. 7-phospho-2-dehydro-3-deoxy-D-arabino-heptonate contacts are provided by residues 264–268 (RNLLN) and histidine 271. Histidine 271 lines the Zn(2+) pocket. Histidine 275 functions as the Proton acceptor; for 3-dehydroquinate synthase activity in the catalytic mechanism. 7-phospho-2-dehydro-3-deoxy-D-arabino-heptonate contacts are provided by histidine 287 and lysine 356. Histidine 287 contributes to the Zn(2+) binding site. The segment at 397–842 (VHPGVAQSSN…WDTLRQLFKV (446 aa)) is EPSP synthase. Residue cysteine 824 is the For EPSP synthase activity of the active site. Residues 863–1055 (NASIYIIGMR…KEKEHSFFAS (193 aa)) are shikimate kinase. ATP is bound at residue 870–877 (GMRGAGKS). Positions 1056-1276 (LTLPDLREAG…AAPGQLSATE (221 aa)) are 3-dehydroquinase. The active-site Proton acceptor; for 3-dehydroquinate dehydratase activity is histidine 1179. Lysine 1207 serves as the catalytic Schiff-base intermediate with substrate; for 3-dehydroquinate dehydratase activity. The interval 1289–1583 (PKKFAIFGSP…SARACSSPLI (295 aa)) is shikimate dehydrogenase.

The protein in the N-terminal section; belongs to the sugar phosphate cyclases superfamily. Dehydroquinate synthase family. This sequence in the 2nd section; belongs to the EPSP synthase family. In the 3rd section; belongs to the shikimate kinase family. It in the 4th section; belongs to the type-I 3-dehydroquinase family. The protein in the C-terminal section; belongs to the shikimate dehydrogenase family. Homodimer. The cofactor is Zn(2+).

The protein localises to the cytoplasm. It catalyses the reaction 7-phospho-2-dehydro-3-deoxy-D-arabino-heptonate = 3-dehydroquinate + phosphate. The enzyme catalyses 3-dehydroquinate = 3-dehydroshikimate + H2O. The catalysed reaction is shikimate + NADP(+) = 3-dehydroshikimate + NADPH + H(+). It carries out the reaction shikimate + ATP = 3-phosphoshikimate + ADP + H(+). It catalyses the reaction 3-phosphoshikimate + phosphoenolpyruvate = 5-O-(1-carboxyvinyl)-3-phosphoshikimate + phosphate. Its pathway is metabolic intermediate biosynthesis; chorismate biosynthesis; chorismate from D-erythrose 4-phosphate and phosphoenolpyruvate: step 2/7. It participates in metabolic intermediate biosynthesis; chorismate biosynthesis; chorismate from D-erythrose 4-phosphate and phosphoenolpyruvate: step 3/7. The protein operates within metabolic intermediate biosynthesis; chorismate biosynthesis; chorismate from D-erythrose 4-phosphate and phosphoenolpyruvate: step 4/7. It functions in the pathway metabolic intermediate biosynthesis; chorismate biosynthesis; chorismate from D-erythrose 4-phosphate and phosphoenolpyruvate: step 5/7. Its pathway is metabolic intermediate biosynthesis; chorismate biosynthesis; chorismate from D-erythrose 4-phosphate and phosphoenolpyruvate: step 6/7. The AROM polypeptide catalyzes 5 consecutive enzymatic reactions in prechorismate polyaromatic amino acid biosynthesis. The sequence is that of Pentafunctional AROM polypeptide (aromA) from Emericella nidulans (strain FGSC A4 / ATCC 38163 / CBS 112.46 / NRRL 194 / M139) (Aspergillus nidulans).